We begin with the raw amino-acid sequence, 467 residues long: UDP-N-acetylmuramoylalanine--D-glutamate ligase (467 aa).

Residue 121–127 (GTNGKST) participates in ATP binding.

The protein belongs to the MurCDEF family.

The protein resides in the cytoplasm. The enzyme catalyses UDP-N-acetyl-alpha-D-muramoyl-L-alanine + D-glutamate + ATP = UDP-N-acetyl-alpha-D-muramoyl-L-alanyl-D-glutamate + ADP + phosphate + H(+). Its pathway is cell wall biogenesis; peptidoglycan biosynthesis. Its function is as follows. Cell wall formation. Catalyzes the addition of glutamate to the nucleotide precursor UDP-N-acetylmuramoyl-L-alanine (UMA). This chain is UDP-N-acetylmuramoylalanine--D-glutamate ligase, found in Brucella suis biovar 1 (strain 1330).